Consider the following 102-residue polypeptide: PqqA binding protein (102 aa).

Belongs to the PqqD family. In terms of assembly, monomer. Interacts with PqqE.

Its pathway is cofactor biosynthesis; pyrroloquinoline quinone biosynthesis. Functionally, functions as a PqqA binding protein and presents PqqA to PqqE, in the pyrroloquinoline quinone (PQQ) biosynthetic pathway. The protein is PqqA binding protein of Rhodopseudomonas palustris (strain HaA2).